A 168-amino-acid chain; its full sequence is uncharacterized protein (168 aa).

Residues 1–10 (MSPTTGPQPN) show a composition bias toward pro residues. Disordered stretches follow at residues 1–23 (MSPTTGPQPNPRAWECHHTTGPQ) and 117–143 (EPGNVTVKRGPQPNPRAWECHRTRGPQ).

This is an uncharacterized protein from Homo sapiens (Human).